Consider the following 71-residue polypeptide: Putative membrane protein insertion efficiency factor (71 aa).

Belongs to the UPF0161 family.

Its subcellular location is the cell membrane. Its function is as follows. Could be involved in insertion of integral membrane proteins into the membrane. The chain is Putative membrane protein insertion efficiency factor from Acetivibrio thermocellus (strain ATCC 27405 / DSM 1237 / JCM 9322 / NBRC 103400 / NCIMB 10682 / NRRL B-4536 / VPI 7372) (Clostridium thermocellum).